Here is a 148-residue protein sequence, read N- to C-terminus: Hemoglobin subunit beta-1 (148 aa).

Residues 3–148 form the Globin domain; that stretch reads EWTDAERTAI…VVSALCRQYH (146 aa). Heme b is bound by residues His64 and His93.

Heterotetramer of two alpha chains and two beta chains. As to expression, red blood cells.

Functionally, involved in oxygen transport from gills to the various peripheral tissues. This chain is Hemoglobin subunit beta-1 (ba1), found in Danio rerio (Zebrafish).